Here is a 338-residue protein sequence, read N- to C-terminus: Cytochrome c biogenesis protein CcsA (338 aa).

8 helical membrane passes run 15–35, 36–56, 71–91, 97–117, 142–162, 246–266, 273–293, and 307–327; these read FLVL…PNIP, GLTG…ATLL, LYES…VAEW, WVGV…ALSL, VMMI…AFLI, IIGL…VWAN, WSWD…AAYL, and AFLA…VNIL.

Belongs to the CcmF/CycK/Ccl1/NrfE/CcsA family. In terms of assembly, may interact with ccs1.

The protein resides in the cellular thylakoid membrane. Required during biogenesis of c-type cytochromes (cytochrome c6 and cytochrome f) at the step of heme attachment. The polypeptide is Cytochrome c biogenesis protein CcsA (Picosynechococcus sp. (strain ATCC 27264 / PCC 7002 / PR-6) (Agmenellum quadruplicatum)).